The sequence spans 451 residues: DNA polymerase delta subunit 3 (451 aa).

Disordered stretches follow at residues 187–241, 259–386, and 404–451; these read SQAK…AASS, KQTP…KVLR, and AWES…FAKK. The span at 200-216 shows a compositional bias: polar residues; it reads PSTSQVKEAPKASQTVE. Over residues 225–241 the composition is skewed to low complexity; that stretch reads SAPAKKGSSAPKSAASS. The span at 306-316 shows a compositional bias: basic and acidic residues; sequence QREEELRRMME. Residues 329–353 show a composition bias toward acidic residues; that stretch reads EEEEEEEEEEESEHEQLPAEEEPMA. The segment covering 354-366 has biased composition (basic and acidic residues); that stretch reads EEPKAPEPVKEEP. Residues 376 to 386 are compositionally biased toward basic residues; that stretch reads GRRRGKRKVLR. The PIP-box signature appears at 441 to 448; sequence QGSIMSWF.

As to quaternary structure, component of the DNA polymerase delta complex which consists of PolD1, PolD2, PolD3 and PolD4, with PolD1 bearing DNA polymerase and 3' to 5' proofreading exonuclease activities. Directly interacts with PCNA.

It localises to the nucleus. Accessory component of the DNA polymerase delta complex. The complex is required for the maintenance of genome integrity, acting in concert with the sliding clamp processivity factor PCNA. This is DNA polymerase delta subunit 3 from Chaetomium thermophilum (strain DSM 1495 / CBS 144.50 / IMI 039719) (Thermochaetoides thermophila).